Here is a 270-residue protein sequence, read N- to C-terminus: SAGA-associated factor 29 homolog A (270 aa).

Serine 2 is modified (N-acetylserine). The interval 85 to 113 (LPSGPTGQQRRKLEGNEQKRKRMKVDTDV) is disordered. The span at 95-113 (RKLEGNEQKRKRMKVDTDV) shows a compositional bias: basic and acidic residues. The region spanning 125 to 270 (EAYASLKGEQ…VVALPEGHRQ (146 aa)) is the SGF29 C-terminal domain. Histone H3K4me3 N-terminus binding regions lie at residues 168 to 170 (DEE) and 217 to 220 (GTTA). The histone H3K4me3 binding stretch occupies residues 242–245 (FDDD).

The protein belongs to the SGF29 family. As to expression, expressed in roots, rosette leaves, cauline leaves, stems and flowers.

The protein resides in the nucleus. Functionally, chromatin reader component of the transcription regulatory histone acetylation (HAT) complex SAGA. Involved in salt stress tolerance. Enhances the effect of ADA2B in the positive regulation of salt-induced gene expression. The protein is SAGA-associated factor 29 homolog A of Arabidopsis thaliana (Mouse-ear cress).